The following is a 122-amino-acid chain: Large ribosomal subunit protein bL12 (122 aa).

It belongs to the bacterial ribosomal protein bL12 family. As to quaternary structure, homodimer. Part of the ribosomal stalk of the 50S ribosomal subunit. Forms a multimeric L10(L12)X complex, where L10 forms an elongated spine to which 2 to 4 L12 dimers bind in a sequential fashion. Binds GTP-bound translation factors.

Functionally, forms part of the ribosomal stalk which helps the ribosome interact with GTP-bound translation factors. Is thus essential for accurate translation. In Streptococcus thermophilus (strain ATCC BAA-491 / LMD-9), this protein is Large ribosomal subunit protein bL12.